A 201-amino-acid polypeptide reads, in one-letter code: Protease (201 aa).

Active-site residues include H55, D72, and C122.

It belongs to the peptidase C5 family. Interacts with protease cofactor pVI-C; this interaction is necessary for protease activation.

The protein localises to the virion. The protein resides in the host nucleus. The enzyme catalyses Cleaves proteins of the adenovirus and its host cell at two consensus sites: -Yaa-Xaa-Gly-Gly-|-Xaa- and -Yaa-Xaa-Gly-Xaa-|-Gly- (in which Yaa is Met, Ile or Leu, and Xaa is any amino acid).. Requires DNA and protease cofactor for maximal activation. Inside nascent virions, becomes partially activated by binding to the viral DNA, allowing it to cleave the cofactor that binds to the protease and fully activates it. Actin, like the viral protease cofactor, seems to act as a cofactor in the cleavage of cytokeratin 18 and of actin itself. Functionally, cleaves viral precursor proteins (pTP, pIIIa, pVI, pVII, pVIII, and pX) inside newly assembled particles giving rise to mature virions. Protease complexed to its cofactor slides along the viral DNA to specifically locate and cleave the viral precursors. Mature virions have a weakened organization compared to the unmature virions, thereby facilitating subsequent uncoating. Without maturation, the particle lacks infectivity and is unable to uncoat. Late in adenovirus infection, in the cytoplasm, may participate in the cytoskeleton destruction. Cleaves host cell cytoskeletal keratins K7 and K18. The polypeptide is Protease (Pantherophis guttatus (Corn snake)).